The chain runs to 628 residues: Phosphomethylpyrimidine synthase (628 aa).

The segment at 1-22 (MSKQEKTINLSESAQVDQQSVQ) is disordered. Over residues 7–22 (TINLSESAQVDQQSVQ) the composition is skewed to polar residues. Residues Asn-232, Met-261, Tyr-290, His-326, 346–348 (SRG), 387–390 (DGLR), and Glu-426 each bind substrate. Residue His-430 coordinates Zn(2+). Tyr-453 contributes to the substrate binding site. Zn(2+) is bound at residue His-494. Residues Cys-574, Cys-577, and Cys-582 each coordinate [4Fe-4S] cluster.

The protein belongs to the ThiC family. As to quaternary structure, homodimer. [4Fe-4S] cluster serves as cofactor.

The enzyme catalyses 5-amino-1-(5-phospho-beta-D-ribosyl)imidazole + S-adenosyl-L-methionine = 4-amino-2-methyl-5-(phosphooxymethyl)pyrimidine + CO + 5'-deoxyadenosine + formate + L-methionine + 3 H(+). The protein operates within cofactor biosynthesis; thiamine diphosphate biosynthesis. Catalyzes the synthesis of the hydroxymethylpyrimidine phosphate (HMP-P) moiety of thiamine from aminoimidazole ribotide (AIR) in a radical S-adenosyl-L-methionine (SAM)-dependent reaction. The sequence is that of Phosphomethylpyrimidine synthase from Pseudomonas putida (strain W619).